The primary structure comprises 430 residues: POU domain, class 2, transcription factor 3 (430 aa).

Disordered regions lie at residues 1-40, 60-81, 129-180, and 248-267; these read MVNL…NGLD, HRPC…SGDM, LLLP…EPTD, and DAES…YPTL. Composition is skewed to polar residues over residues 23–32 and 67–78; these read ARSTFGQVES and QGPTMMPGNQMS. Residues 129 to 139 are compositionally biased toward low complexity; sequence LLLPQTGPGLT. Residues 176–250 enclose the POU-specific domain; it reads DEPTDLEELE…LLEKWLNDAE (75 aa). Residues 251–267 are compositionally biased toward low complexity; that stretch reads SSPSDPSASTPSSYPTL. The segment at residues 274–333 is a DNA-binding region (homeobox); the sequence is KRKKRTSIETNIRLTLEKRFQDNPKPSSEEISMIAEQLSMEKEVVRVWFCNRRQKEKRIN. 2 stretches are compositionally biased toward low complexity: residues 355–364 and 374–390; these read SLGSLSVPPV and SSCS…PGSG. A disordered region spans residues 355–413; it reads SLGSLSVPPVHSTMPGTVTSSCSPGNNSRPSSPGSGLHASSPTASQNNSKAAMNPSSAA. The segment covering 392-413 has biased composition (polar residues); sequence HASSPTASQNNSKAAMNPSSAA.

This sequence belongs to the POU transcription factor family. Class-2 subfamily. As to quaternary structure, interacts (via the POU domain) with POU2AF1 and POU2AF2 in a DNA-dependent manner; this interaction recruits POU2AF2 to chromatin and increases POU2F3 transactivation activity. As to expression, expressed in epidermis and hair follicles.

Its subcellular location is the nucleus. Transcription factor that binds to the octamer motif (5'-ATTTGCAT-3') and regulates cell type-specific differentiation pathways. Involved in the regulation of keratinocytes differentiation. The POU2F3-POU2AF2/POU2AF3 complex drives the expression of tuft-cell-specific genes, a rare chemosensory cells that coordinate immune and neural functions within mucosal epithelial tissues. In terms of biological role, inhibits transactivation by POU2F1. The sequence is that of POU domain, class 2, transcription factor 3 (Pou2f3) from Rattus norvegicus (Rat).